Consider the following 106-residue polypeptide: uncharacterized protein (106 aa).

Belongs to the HesB/IscA family.

This is an uncharacterized protein from Bradyrhizobium diazoefficiens (strain JCM 10833 / BCRC 13528 / IAM 13628 / NBRC 14792 / USDA 110).